The following is a 37-amino-acid chain: Large ribosomal subunit protein bL36c (37 aa).

This sequence belongs to the bacterial ribosomal protein bL36 family.

It is found in the plastid. The protein resides in the chloroplast. In Pinus koraiensis (Korean pine), this protein is Large ribosomal subunit protein bL36c.